The sequence spans 650 residues: Flap endonuclease 1 (650 aa).

Residues 1 to 106 (MGIKGLTKFI…SELEKRGEKR (106 aa)) are N-domain. Asp-34 is a binding site for Mg(2+). Residues Arg-47 and Arg-72 each contribute to the DNA site. Mg(2+) contacts are provided by Asp-88, Glu-160, Glu-162, Asp-181, and Asp-183. Residues 124-266 (EIKKQSGRTV…KTAYNLIKEY (143 aa)) are I-domain. Glu-160 provides a ligand contact to DNA. Positions 244 and 246 each coordinate DNA. Position 246 (Asp-246) interacts with Mg(2+). The segment at 349-357 (TQRRLDNFF) is interaction with PCNA. The interval 371–592 (ETKKEQTLPA…NSYNNIKNNN (222 aa)) is disordered. Composition is skewed to basic and acidic residues over residues 413-469 (MKEE…KKSL), 478-502 (DSDK…EKIN), and 511-524 (DHSR…KDNI). Positions 525–562 (SDINNNNNNNNNNSSSNNNNISNNHFNSVSSNSTFNSS) are enriched in low complexity. Residues 565 to 581 (LKSEDTLKSNSPLKEDS) are compositionally biased toward basic and acidic residues. Positions 582-592 (PNSYNNIKNNN) are enriched in low complexity.

The protein belongs to the XPG/RAD2 endonuclease family. FEN1 subfamily. As to quaternary structure, interacts with PCNA1 and PCNA2. Three molecules of FEN1 bind to one PCNA trimer with each molecule binding to one PCNA monomer. PCNA stimulates the nuclease activity without altering cleavage specificity. Mg(2+) serves as cofactor. Post-translationally, phosphorylated. Phosphorylation upon DNA damage induces relocalization to the nuclear plasma.

It is found in the nucleus. The protein localises to the nucleolus. It localises to the nucleoplasm. Its subcellular location is the mitochondrion. Inhibited by monovalent metal ions. Functionally, structure-specific nuclease with 5'-flap endonuclease and 5'-3' exonuclease activities involved in DNA replication and repair. During DNA replication, cleaves the 5'-overhanging flap structure that is generated by displacement synthesis when DNA polymerase encounters the 5'-end of a downstream Okazaki fragment. It enters the flap from the 5'-end and then tracks to cleave the flap base, leaving a nick for ligation. Also involved in the long patch base excision repair (LP-BER) pathway, by cleaving within the apurinic/apyrimidinic (AP) site-terminated flap. Acts as a genome stabilization factor that prevents flaps from equilibrating into structures that lead to duplications and deletions. Also possesses 5'-3' exonuclease activity on nicked or gapped double-stranded DNA, and exhibits RNase H activity. Also involved in replication and repair of rDNA and in repairing mitochondrial DNA. This Plasmodium falciparum protein is Flap endonuclease 1.